The primary structure comprises 395 residues: 1-deoxy-D-xylulose 5-phosphate reductoisomerase (395 aa).

6 residues coordinate NADPH: Thr13, Gly14, Ser15, Ile16, Lys40, and Asn127. A 1-deoxy-D-xylulose 5-phosphate-binding site is contributed by Lys128. NADPH is bound at residue Glu129. Residue Asp153 participates in Mn(2+) binding. 1-deoxy-D-xylulose 5-phosphate contacts are provided by Ser154, Glu155, Ser184, and His207. Glu155 provides a ligand contact to Mn(2+). Position 213 (Gly213) interacts with NADPH. The 1-deoxy-D-xylulose 5-phosphate site is built by Ser220, Asn225, Lys226, and Glu229. Glu229 serves as a coordination point for Mn(2+).

It belongs to the DXR family. Mg(2+) serves as cofactor. Requires Mn(2+) as cofactor.

It carries out the reaction 2-C-methyl-D-erythritol 4-phosphate + NADP(+) = 1-deoxy-D-xylulose 5-phosphate + NADPH + H(+). The protein operates within isoprenoid biosynthesis; isopentenyl diphosphate biosynthesis via DXP pathway; isopentenyl diphosphate from 1-deoxy-D-xylulose 5-phosphate: step 1/6. Functionally, catalyzes the NADPH-dependent rearrangement and reduction of 1-deoxy-D-xylulose-5-phosphate (DXP) to 2-C-methyl-D-erythritol 4-phosphate (MEP). The protein is 1-deoxy-D-xylulose 5-phosphate reductoisomerase of Nitrosospira multiformis (strain ATCC 25196 / NCIMB 11849 / C 71).